The sequence spans 306 residues: D-aminoacyl-tRNA deacylase (306 aa).

The protein belongs to the DtdA deacylase family. In terms of assembly, monomer. Zn(2+) is required as a cofactor.

The catalysed reaction is a D-aminoacyl-tRNA + H2O = a tRNA + a D-alpha-amino acid + H(+). It carries out the reaction glycyl-tRNA(Ala) + H2O = tRNA(Ala) + glycine + H(+). Functionally, D-aminoacyl-tRNA deacylase with broad substrate specificity. By recycling D-aminoacyl-tRNA to D-amino acids and free tRNA molecules, this enzyme counteracts the toxicity associated with the formation of D-aminoacyl-tRNA entities in vivo. The sequence is that of D-aminoacyl-tRNA deacylase from Methanosarcina barkeri (strain Fusaro / DSM 804).